The chain runs to 643 residues: Pesticidal crystal protein Cry11Aa (643 aa).

The protein belongs to the delta endotoxin family.

Promotes colloidosmotic lysis by binding to the midgut epithelial cells of mosquitos. This chain is Pesticidal crystal protein Cry11Aa (cry11Aa), found in Bacillus thuringiensis subsp. israelensis.